The following is a 1153-amino-acid chain: ATP-dependent helicase/deoxyribonuclease subunit B (1153 aa).

8-15 (GRAGSGKS) provides a ligand contact to ATP. [4Fe-4S] cluster-binding residues include C786, C1104, C1107, and C1113.

It belongs to the helicase family. AddB/RexB type 1 subfamily. In terms of assembly, heterodimer of AddA and AddB. The cofactor is Mg(2+). Requires [4Fe-4S] cluster as cofactor.

Its function is as follows. The heterodimer acts as both an ATP-dependent DNA helicase and an ATP-dependent, dual-direction single-stranded exonuclease. Recognizes the chi site generating a DNA molecule suitable for the initiation of homologous recombination. The AddB subunit has 5' -&gt; 3' nuclease activity but not helicase activity. This Clostridium acetobutylicum (strain ATCC 824 / DSM 792 / JCM 1419 / IAM 19013 / LMG 5710 / NBRC 13948 / NRRL B-527 / VKM B-1787 / 2291 / W) protein is ATP-dependent helicase/deoxyribonuclease subunit B.